A 122-amino-acid polypeptide reads, in one-letter code: MIQMQTNLDVADNSGARRVMCIKVLGGSKRKYASVGDIIVVSIKEAIPRGRVKKGDVMKAVVVRTAKDIRRADGSVIRFDNNAAVLIDNKKEPIGTRIFGPVPRELRAKNHMKIISLAPEVL.

It belongs to the universal ribosomal protein uL14 family. As to quaternary structure, part of the 50S ribosomal subunit. Forms a cluster with proteins L3 and L19. In the 70S ribosome, L14 and L19 interact and together make contacts with the 16S rRNA in bridges B5 and B8.

In terms of biological role, binds to 23S rRNA. Forms part of two intersubunit bridges in the 70S ribosome. The protein is Large ribosomal subunit protein uL14 of Agrobacterium fabrum (strain C58 / ATCC 33970) (Agrobacterium tumefaciens (strain C58)).